A 132-amino-acid polypeptide reads, in one-letter code: Holo-[acyl-carrier-protein] synthase (132 aa).

Mg(2+) is bound by residues D8 and E64.

It belongs to the P-Pant transferase superfamily. AcpS family. It depends on Mg(2+) as a cofactor.

Its subcellular location is the cytoplasm. The enzyme catalyses apo-[ACP] + CoA = holo-[ACP] + adenosine 3',5'-bisphosphate + H(+). In terms of biological role, transfers the 4'-phosphopantetheine moiety from coenzyme A to a Ser of acyl-carrier-protein. This Shewanella woodyi (strain ATCC 51908 / MS32) protein is Holo-[acyl-carrier-protein] synthase.